Here is a 378-residue protein sequence, read N- to C-terminus: Erythronate-4-phosphate dehydrogenase (378 aa).

Positions 45 and 67 each coordinate substrate. D147 provides a ligand contact to NAD(+). R209 is an active-site residue. D233 serves as a coordination point for NAD(+). Residue E238 is part of the active site. H255 acts as the Proton donor in catalysis. G258 contacts NAD(+). Y259 contacts substrate.

It belongs to the D-isomer specific 2-hydroxyacid dehydrogenase family. PdxB subfamily. Homodimer.

The protein resides in the cytoplasm. It carries out the reaction 4-phospho-D-erythronate + NAD(+) = (R)-3-hydroxy-2-oxo-4-phosphooxybutanoate + NADH + H(+). Its pathway is cofactor biosynthesis; pyridoxine 5'-phosphate biosynthesis; pyridoxine 5'-phosphate from D-erythrose 4-phosphate: step 2/5. Catalyzes the oxidation of erythronate-4-phosphate to 3-hydroxy-2-oxo-4-phosphonooxybutanoate. In Shewanella denitrificans (strain OS217 / ATCC BAA-1090 / DSM 15013), this protein is Erythronate-4-phosphate dehydrogenase.